Reading from the N-terminus, the 499-residue chain is Glycerol kinase (499 aa).

Residue Thr17 coordinates ADP. ATP is bound by residues Thr17, Thr18, and Ser19. Thr17 is a sn-glycerol 3-phosphate binding site. Arg21 lines the ADP pocket. Residues Arg87, Glu88, Tyr139, and Asp243 each contribute to the sn-glycerol 3-phosphate site. Glycerol-binding residues include Arg87, Glu88, Tyr139, Asp243, and Gln244. Residues Thr265 and Gly308 each contribute to the ADP site. ATP is bound by residues Thr265, Gly308, Gln312, and Gly409. The ADP site is built by Gly409 and Asn413.

The protein belongs to the FGGY kinase family.

The catalysed reaction is glycerol + ATP = sn-glycerol 3-phosphate + ADP + H(+). The protein operates within polyol metabolism; glycerol degradation via glycerol kinase pathway; sn-glycerol 3-phosphate from glycerol: step 1/1. Inhibited by fructose 1,6-bisphosphate (FBP). Its function is as follows. Key enzyme in the regulation of glycerol uptake and metabolism. Catalyzes the phosphorylation of glycerol to yield sn-glycerol 3-phosphate. This is Glycerol kinase from Pseudomonas entomophila (strain L48).